A 385-amino-acid polypeptide reads, in one-letter code: Acetylornithine aminotransferase (385 aa).

Pyridoxal 5'-phosphate is bound by residues 95-96 (GA) and Phe122. Arg125 is a binding site for N(2)-acetyl-L-ornithine. Residue 208–211 (DEIQ) coordinates pyridoxal 5'-phosphate. The residue at position 237 (Lys237) is an N6-(pyridoxal phosphate)lysine. Thr265 provides a ligand contact to N(2)-acetyl-L-ornithine. Thr266 provides a ligand contact to pyridoxal 5'-phosphate.

The protein belongs to the class-III pyridoxal-phosphate-dependent aminotransferase family. ArgD subfamily. In terms of assembly, homodimer. Pyridoxal 5'-phosphate serves as cofactor.

It localises to the cytoplasm. It catalyses the reaction N(2)-acetyl-L-ornithine + 2-oxoglutarate = N-acetyl-L-glutamate 5-semialdehyde + L-glutamate. It functions in the pathway amino-acid biosynthesis; L-arginine biosynthesis; N(2)-acetyl-L-ornithine from L-glutamate: step 4/4. The polypeptide is Acetylornithine aminotransferase (Bacillus subtilis (strain 168)).